The chain runs to 497 residues: TBC1 domain family member 22A (497 aa).

The interval 83–147 (RNHSQRQGRP…DAAPLQRSQS (65 aa)) is disordered. S112, S125, and S147 each carry phosphoserine. In terms of domain architecture, Rab-GAP TBC spans 202 to 426 (GIPKPVRPMT…RLWDTYQSEP (225 aa)).

Homodimer. Interacts with ACBD3 and ARFGEF1. Interacts with YWHAB, YWHAE, YWHAG, YWHAH, YWHAQ and YWHAZ.

In terms of biological role, may act as a GTPase-activating protein for Rab family protein(s). This is TBC1 domain family member 22A (TBC1D22A) from Macaca fascicularis (Crab-eating macaque).